Reading from the N-terminus, the 540-residue chain is Chaperonin GroEL (540 aa).

ATP-binding positions include 30 to 33 (TLGP), K51, 87 to 91 (DGTTT), G415, 479 to 481 (NAA), and D495.

Belongs to the chaperonin (HSP60) family. In terms of assembly, forms a cylinder of 14 subunits composed of two heptameric rings stacked back-to-back. Interacts with the co-chaperonin GroES.

Its subcellular location is the cytoplasm. The catalysed reaction is ATP + H2O + a folded polypeptide = ADP + phosphate + an unfolded polypeptide.. Its function is as follows. Together with its co-chaperonin GroES, plays an essential role in assisting protein folding. The GroEL-GroES system forms a nano-cage that allows encapsulation of the non-native substrate proteins and provides a physical environment optimized to promote and accelerate protein folding. This chain is Chaperonin GroEL, found in Pluralibacter gergoviae (Enterobacter gergoviae).